A 629-amino-acid polypeptide reads, in one-letter code: G1-specific transcription factors activator MSA1 (629 aa).

Basic residues predominate over residues 1–11 (MDKSMIKKRGR). Disordered stretches follow at residues 1-60 (MDKS…KRRL), 83-106 (STPTKKSSTNGSTPISTPSSNDSY), 217-286 (YCDT…SSLQ), 455-485 (VQVQSQSNSPTQRQQQQRQFQIPPPHINMNS), and 586-629 (PNLH…IDDQ). The segment covering 21-37 (PLQSPMAHSSMQVQKQG) has biased composition (polar residues). The segment covering 245–260 (IETSASPIGSARNNNI) has biased composition (polar residues). 2 stretches are compositionally biased toward low complexity: residues 261 to 277 (LLSQPPQSPPSSAQLKP) and 455 to 475 (VQVQSQSNSPTQRQQQQRQFQ). Phosphoserine is present on Ser-268. Over residues 614–629 (KQDDARTALKRLIDDQ) the composition is skewed to basic and acidic residues.

As to quaternary structure, interacts with transcription complexes SCB-binding factor (SBF) and MCB-binding factor (MBF) at their target promoters. Interacts with MBP1 and SWI6. Post-translationally, phosphorylated by CDC28.

In terms of biological role, activator of G1-specific transcription factors, MBF and SBF. Promotes both the timing of G1-specific gene transcription and cell cycle initiation. Associates with SBF- and MBF-regulated target promoters and this binding is maximal during the G1 phase, prior to maximum budding. Affects cell cycle initiation by advancing the timing of transcription of G1-specific genes. Overexpression advances the timing of SBF-dependent transcription and budding. Depletion delays both indicators of cell cycle initiation. The sequence is that of G1-specific transcription factors activator MSA1 (MSA1) from Saccharomyces cerevisiae (strain ATCC 204508 / S288c) (Baker's yeast).